We begin with the raw amino-acid sequence, 701 residues long: DNA ligase (701 aa).

The interval 1 to 21 (MSAKSTPDAGPQEQATEAEAE) is disordered. NAD(+)-binding positions include 50–54 (DADFD), 100–101 (SL), and Glu130. Lys132 functions as the N6-AMP-lysine intermediate in the catalytic mechanism. Residues Arg153, Glu193, Lys309, and Lys333 each contribute to the NAD(+) site. Positions 427, 430, 446, and 452 each coordinate Zn(2+). In terms of domain architecture, BRCT spans 616-701 (SIARTLEGLS…LENGPQAPEG (86 aa)).

This sequence belongs to the NAD-dependent DNA ligase family. LigA subfamily. Mg(2+) is required as a cofactor. Mn(2+) serves as cofactor.

It catalyses the reaction NAD(+) + (deoxyribonucleotide)n-3'-hydroxyl + 5'-phospho-(deoxyribonucleotide)m = (deoxyribonucleotide)n+m + AMP + beta-nicotinamide D-nucleotide.. DNA ligase that catalyzes the formation of phosphodiester linkages between 5'-phosphoryl and 3'-hydroxyl groups in double-stranded DNA using NAD as a coenzyme and as the energy source for the reaction. It is essential for DNA replication and repair of damaged DNA. The protein is DNA ligase of Mycobacterium sp. (strain KMS).